The primary structure comprises 366 residues: MKFTVEREHLLKPLQQVSGPLGGRPTLPILGNLLLQVADGTLSLTGTDLEMEMVARVTLSQPHEPGATTVPARKFFDICRGLPEGAEIAVQLEGDRMLVRSGRSRFSLSTLPAADFPNLDDWQSEVEFTLPQATMKRLIESTQFSMAHQDVRYYLNGMLFETEGSELRTVATDGHRLAVCSMPLEASLPSHSVIVPRKGVIELMRMLDGGENPLRVQIGSNNIRAHVGDFIFTSKLVDGRFPDYRRVLPKNPDKHLEAGCDILKQAFARAAILSNEKFRGVRLYVSENQLKITANNPEQEEAEEILDVSYGGTEMEIGFNVSYVLDVLNALKCETVRIMLTDSVSSVQIEDAASQSAAYVVMPMRL.

The protein belongs to the beta sliding clamp family. In terms of assembly, forms a ring-shaped head-to-tail homodimer around DNA which binds and tethers DNA polymerases and other proteins to the DNA. The DNA replisome complex has a single clamp-loading complex (3 tau and 1 each of delta, delta', psi and chi subunits) which binds 3 Pol III cores (1 core on the leading strand and 2 on the lagging strand) each with a beta sliding clamp dimer. Additional proteins in the replisome are other copies of gamma, psi and chi, Ssb, DNA helicase and RNA primase.

It is found in the cytoplasm. Functionally, confers DNA tethering and processivity to DNA polymerases and other proteins. Acts as a clamp, forming a ring around DNA (a reaction catalyzed by the clamp-loading complex) which diffuses in an ATP-independent manner freely and bidirectionally along dsDNA. Initially characterized for its ability to contact the catalytic subunit of DNA polymerase III (Pol III), a complex, multichain enzyme responsible for most of the replicative synthesis in bacteria; Pol III exhibits 3'-5' exonuclease proofreading activity. The beta chain is required for initiation of replication as well as for processivity of DNA replication. This is Beta sliding clamp (dnaN) from Salmonella typhimurium (strain LT2 / SGSC1412 / ATCC 700720).